We begin with the raw amino-acid sequence, 1069 residues long: Adenylate-forming reductase (1069 aa).

Residues 20–391 are adenylation (A) domain; it reads HPEDPKAVKS…WKLRQDINYR (372 aa). AMP-binding positions include H262, 357–358, T362, and 437–440; these read AH and AVGR. In terms of domain architecture, Carrier spans 576 to 656; the sequence is DSLEEDLKDL…KLGASLRHLA (81 aa). S612 bears the O-(pantetheine 4'-phosphoryl)serine mark. Positions 686 to 1032 are reductase (R) domain; that stretch reads TVLLTGSTGN…TGKVILDTSR (347 aa). NADP(+) is bound by residues 693-696, R719, 785-787, Y863, and K867; these read TGNL and NAW.

Belongs to the adenylate-forming reductase family.

The enzyme catalyses 5-methylorsellinate + ATP + NADPH + H(+) = 2,4-dihydroxy 5,6-dimethylbenzaldehyde + AMP + diphosphate + NADP(+). Its pathway is secondary metabolite biosynthesis. In terms of biological role, non-canonical non-ribosomal peptide synthetase; part of the cluster A that mediates the biosynthesis of azasperpyranones, members of the azaphilone family that exhibit anti-cancer activities. Azasperpyranones are synthesized by 2 clusters, A and B. Cluster A is responsible for the production of the polyhydric phenol moiety while the azaphilonoid scaffold is produced by the cluster B. The non-reducing polyketide synthase ATEG_03629 produces 5-methyl orsellinic acid, which is then reduced to 5-methyl orsellinic aldehyde by the NRPS-like protein ATEG_03630. 5-methyl orsellinic aldehyde is then first hydroxylated by the FAD-dependent monooxygenase ATEG_03635 and subsequently hydroxylated by the cytochrome P450 monooxygenase ATEG_03631 to produce the unstable polyhydric phenol precursor of azasperpyranones. On the other hand, the polyketide synthase ATEG_07659 is responsible for producing the 3,5-dimethyloctadienone moiety from acetyl-CoA, three malonyl-CoA, and two S-adenosyl methionines (SAM). The 3,5-dimethyloctadienone moiety is then loaded onto the SAT domain of ATEG_07661 and extended with four malonyl-CoA and one SAM, which leads to the formation of 2,4-dihydroxy-6-(5,7-dimethyl-2-oxo-trans-3-trans-5-nonadienyl)-3-methylbenzaldehyde (compound 8) after reductive release and aldol condensation. The FAD-dependent monooxygenase ATEG_07662 is the next enzyme in the biosynthesis sequence and hydroxylates the side chain at the benzylic position of compound 8. In Aspergillus nidulans, afoF, the ortholog of the FAD-dependent oxygenase ATEG_07660, is the key enzyme for the biosynthesis of asperfuranone by catalyzing the hydroxylation at C-8 of to prevent the formation of a six-membered ring hemiacetal intermediate and thus facilitating the formation of a five-membered ring to produce asperfuranone. In Aspergillus terreus, ATEG_07660 is probably not functional, which leads to the formation of the six-membered ring hemiacetal intermediate presperpyranone instead of asperfuranone. Finally, ATEG_03636 is involved in the condensation of the polyhydric phenol moiety produced by cluster A and the perasperpyranone precursor produced by cluster B, to yield azasperpyranone A. Further modifications of azasperpyranone A result in the production of derivatives, including azasperpyranone B to F. This is Adenylate-forming reductase from Aspergillus terreus (strain NIH 2624 / FGSC A1156).